Here is a 692-residue protein sequence, read N- to C-terminus: uncharacterized protein (692 aa).

Response regulatory domains are found at residues 9 to 130 (RVLY…LRMC) and 139 to 255 (RILI…EYRM). A 4-aspartylphosphate mark is found at Asp58 and Asp188. One can recognise a GGDEF domain in the interval 299-432 (GVHGLVIIDV…GGNQAHVWSA (134 aa)). Residues 443 to 691 (ESVIKRLVST…SFDFQHMSHD (249 aa)) enclose the EAL domain.

This is an uncharacterized protein from Thiocystis violacea.